We begin with the raw amino-acid sequence, 337 residues long: Inositol 2-dehydrogenase 1 (337 aa).

The protein belongs to the Gfo/Idh/MocA family. In terms of assembly, homotetramer.

The catalysed reaction is myo-inositol + NAD(+) = scyllo-inosose + NADH + H(+). In terms of biological role, involved in the oxidation of myo-inositol (MI) to 2-keto-myo-inositol (2KMI or 2-inosose). This Saccharopolyspora erythraea (strain ATCC 11635 / DSM 40517 / JCM 4748 / NBRC 13426 / NCIMB 8594 / NRRL 2338) protein is Inositol 2-dehydrogenase 1.